The sequence spans 375 residues: MATNPSNGLEGDNTLQSICYHRGSLKLLDQRKLPLETTYLDIKDASDGWLAIREMVVRGAPAIAISAALSLAVEVSNLENFNGTPVEAASFLAGKLDYLVSSRPTAVNLSDAATKLKEVVSKAAAAASNCQSVFQAYIEAAEIMLADDVASNKAIGSYGARFIQNQQKDPTKLSVLTHCNTGSLATAGYGTALGVIRALHGEGVLQRAYCTETRPFNQGSRLTAFELVHEKIPATLIADSAAAALMKDSKVSAVVVGADRVAANGDTANKIGTYSLALCAMHHNIPFYVAAPLTSFDSSLSSGKEIIIEERSPKEMLNARGGLGEQVAASGISVWNPAFDVTPASLISGIITEKGVITKTGMDDFDIKDFINKAG.

The active-site Proton donor is D259.

It belongs to the eIF-2B alpha/beta/delta subunits family. MtnA subfamily.

Its subcellular location is the cytoplasm. It localises to the nucleus. It catalyses the reaction 5-(methylsulfanyl)-alpha-D-ribose 1-phosphate = 5-(methylsulfanyl)-D-ribulose 1-phosphate. It functions in the pathway amino-acid biosynthesis; L-methionine biosynthesis via salvage pathway; L-methionine from S-methyl-5-thio-alpha-D-ribose 1-phosphate: step 1/6. Its function is as follows. Catalyzes the interconversion of methylthioribose-1-phosphate (MTR-1-P) into methylthioribulose-1-phosphate (MTRu-1-P). The polypeptide is Methylthioribose-1-phosphate isomerase (Populus trichocarpa (Western balsam poplar)).